A 496-amino-acid polypeptide reads, in one-letter code: Lysosomal Pro-X carboxypeptidase (496 aa).

A signal peptide spans 1–21 (MGRRALLLLLLSFLAPWATIA). The propeptide occupies 22 to 45 (LRPALRALGSLHLPTNPTSLPAVA). N-linked (GlcNAc...) asparagine glycosylation is found at Asn47 and Asn101. The active-site Charge relay system is Ser179. The interval 194-334 (HMVVGALAAS…QNIFQALNVY (141 aa)) is SKS domain. 4 disulfides stabilise this stretch: Cys215-Cys372, Cys233-Cys310, Cys264-Cys343, and Cys364-Cys394. N-linked (GlcNAc...) asparagine glycosylation is found at Asn317, Asn336, and Asn345. N-linked (GlcNAc...) asparagine glycosylation occurs at Asn415. Catalysis depends on charge relay system residues Asp430 and His455.

It belongs to the peptidase S28 family. In terms of assembly, homodimer. In terms of tissue distribution, highest levels in placenta, lung and liver. Also present in heart, brain, pancreas and kidney.

Its subcellular location is the lysosome. The enzyme catalyses Cleavage of a -Pro-|-Xaa bond to release a C-terminal amino acid.. Cleaves C-terminal amino acids linked to proline in peptides such as angiotensin II, III and des-Arg9-bradykinin. This cleavage occurs at acidic pH, but enzymatic activity is retained with some substrates at neutral pH. In Homo sapiens (Human), this protein is Lysosomal Pro-X carboxypeptidase (PRCP).